We begin with the raw amino-acid sequence, 89 residues long: Cell division topological specificity factor (89 aa).

It belongs to the MinE family.

Functionally, prevents the cell division inhibition by proteins MinC and MinD at internal division sites while permitting inhibition at polar sites. This ensures cell division at the proper site by restricting the formation of a division septum at the midpoint of the long axis of the cell. This is Cell division topological specificity factor from Brucella anthropi (strain ATCC 49188 / DSM 6882 / CCUG 24695 / JCM 21032 / LMG 3331 / NBRC 15819 / NCTC 12168 / Alc 37) (Ochrobactrum anthropi).